A 90-amino-acid chain; its full sequence is Large ribosomal subunit protein bL31 (90 aa).

The disordered stretch occupies residues 65–90 (YSKQEGSGSKSNKSKSTKSKKGKGKK). Basic residues predominate over residues 76-90 (NKSKSTKSKKGKGKK).

This sequence belongs to the bacterial ribosomal protein bL31 family. Type A subfamily. In terms of assembly, part of the 50S ribosomal subunit.

Functionally, binds the 23S rRNA. The chain is Large ribosomal subunit protein bL31 from Trichodesmium erythraeum (strain IMS101).